Reading from the N-terminus, the 566-residue chain is Proline--tRNA ligase 1 (566 aa).

The protein belongs to the class-II aminoacyl-tRNA synthetase family. ProS type 1 subfamily. In terms of assembly, homodimer.

It localises to the cytoplasm. The enzyme catalyses tRNA(Pro) + L-proline + ATP = L-prolyl-tRNA(Pro) + AMP + diphosphate. Its function is as follows. Catalyzes the attachment of proline to tRNA(Pro) in a two-step reaction: proline is first activated by ATP to form Pro-AMP and then transferred to the acceptor end of tRNA(Pro). As ProRS can inadvertently accommodate and process non-cognate amino acids such as alanine and cysteine, to avoid such errors it has two additional distinct editing activities against alanine. One activity is designated as 'pretransfer' editing and involves the tRNA(Pro)-independent hydrolysis of activated Ala-AMP. The other activity is designated 'posttransfer' editing and involves deacylation of mischarged Ala-tRNA(Pro). The misacylated Cys-tRNA(Pro) is not edited by ProRS. The sequence is that of Proline--tRNA ligase 1 from Bacillus cereus (strain ZK / E33L).